We begin with the raw amino-acid sequence, 296 residues long: NAD kinase (296 aa).

Asp-73 (proton acceptor) is an active-site residue. NAD(+) is bound by residues 73–74 (DG), Lys-78, 151–152 (NE), Arg-178, Asp-180, and 191–196 (TAHAMS).

It belongs to the NAD kinase family. A divalent metal cation serves as cofactor.

It localises to the cytoplasm. It catalyses the reaction NAD(+) + ATP = ADP + NADP(+) + H(+). Involved in the regulation of the intracellular balance of NAD and NADP, and is a key enzyme in the biosynthesis of NADP. Catalyzes specifically the phosphorylation on 2'-hydroxyl of the adenosine moiety of NAD to yield NADP. In Francisella tularensis subsp. holarctica (strain FTNF002-00 / FTA), this protein is NAD kinase.